The sequence spans 350 residues: Methionine import ATP-binding protein MetN (350 aa).

An ABC transporter domain is found at 2–242 (IELKGISQHF…PRHDVTRALI (241 aa)). 39–46 (GRSGAGKS) provides a ligand contact to ATP.

Belongs to the ABC transporter superfamily. Methionine importer (TC 3.A.1.24) family. In terms of assembly, the complex is composed of two ATP-binding proteins (MetN), two transmembrane proteins (MetI) and a solute-binding protein (MetQ).

It localises to the cell inner membrane. It carries out the reaction L-methionine(out) + ATP + H2O = L-methionine(in) + ADP + phosphate + H(+). It catalyses the reaction D-methionine(out) + ATP + H2O = D-methionine(in) + ADP + phosphate + H(+). Functionally, part of the ABC transporter complex MetNIQ involved in methionine import. Responsible for energy coupling to the transport system. The polypeptide is Methionine import ATP-binding protein MetN (Ralstonia nicotianae (strain ATCC BAA-1114 / GMI1000) (Ralstonia solanacearum)).